Consider the following 335-residue polypeptide: Teichoic acids export ATP-binding protein TagH (335 aa).

Residues I26–K246 form the ABC transporter domain. Residue G60–S67 participates in ATP binding.

This sequence belongs to the ABC transporter superfamily. Teichoic acids exporter (TC 3.A.1.104.1) family. In terms of assembly, the complex is composed of two ATP-binding proteins (TagH) and two transmembrane proteins (TagG).

The protein localises to the cell membrane. The enzyme catalyses ATP + H2O + teichoic acidSide 1 = ADP + phosphate + teichoic acidSide 2.. Its function is as follows. Part of the ABC transporter complex TagGH involved in teichoic acids export. Responsible for energy coupling to the transport system. This Listeria monocytogenes serotype 4b (strain F2365) protein is Teichoic acids export ATP-binding protein TagH.